A 484-amino-acid polypeptide reads, in one-letter code: Glutamyl-tRNA(Gln) amidotransferase subunit A (484 aa).

Catalysis depends on charge relay system residues lysine 76 and serine 151. Serine 175 serves as the catalytic Acyl-ester intermediate.

This sequence belongs to the amidase family. GatA subfamily. As to quaternary structure, heterotrimer of A, B and C subunits.

The catalysed reaction is L-glutamyl-tRNA(Gln) + L-glutamine + ATP + H2O = L-glutaminyl-tRNA(Gln) + L-glutamate + ADP + phosphate + H(+). In terms of biological role, allows the formation of correctly charged Gln-tRNA(Gln) through the transamidation of misacylated Glu-tRNA(Gln) in organisms which lack glutaminyl-tRNA synthetase. The reaction takes place in the presence of glutamine and ATP through an activated gamma-phospho-Glu-tRNA(Gln). The sequence is that of Glutamyl-tRNA(Gln) amidotransferase subunit A from Cellvibrio japonicus (strain Ueda107) (Pseudomonas fluorescens subsp. cellulosa).